Consider the following 165-residue polypeptide: Destrin (165 aa).

Ala-2 is modified (N-acetylalanine). A Phosphoserine modification is found at Ser-3. Residues 4–153 (GVQVADEVCR…NRTSIAEKLG (150 aa)) enclose the ADF-H domain. Residue Lys-19 is modified to N6-acetyllysine. The Nuclear localization signal signature appears at 30-34 (KKRKK).

Belongs to the actin-binding proteins ADF family. ISGylated.

Functionally, actin-depolymerizing protein. Severs actin filaments (F-actin) and binds to actin monomers (G-actin). Acts in a pH-independent manner. This chain is Destrin (Dstn), found in Rattus norvegicus (Rat).